The following is a 354-amino-acid chain: UDP-3-O-acylglucosamine N-acyltransferase (354 aa).

His257 acts as the Proton acceptor in catalysis. The segment at 335-354 (AQQVSKSKLRGRNPGGKQND) is disordered.

It belongs to the transferase hexapeptide repeat family. LpxD subfamily. Homotrimer.

It carries out the reaction a UDP-3-O-[(3R)-3-hydroxyacyl]-alpha-D-glucosamine + a (3R)-hydroxyacyl-[ACP] = a UDP-2-N,3-O-bis[(3R)-3-hydroxyacyl]-alpha-D-glucosamine + holo-[ACP] + H(+). The protein operates within bacterial outer membrane biogenesis; LPS lipid A biosynthesis. Catalyzes the N-acylation of UDP-3-O-acylglucosamine using 3-hydroxyacyl-ACP as the acyl donor. Is involved in the biosynthesis of lipid A, a phosphorylated glycolipid that anchors the lipopolysaccharide to the outer membrane of the cell. In Rhizobium etli (strain ATCC 51251 / DSM 11541 / JCM 21823 / NBRC 15573 / CFN 42), this protein is UDP-3-O-acylglucosamine N-acyltransferase.